Here is an 887-residue protein sequence, read N- to C-terminus: MTSKEIRQQYLKFFESKGHLIVPSAPIVLKDDPTLMFNNSGMAQFKEYFLGNGTPKSPRIADTQKCLRVSGKHNDLEDVGFDTYHHTMFEMLGNWSFGDYFKKEAINWAWELLTEVYKIPKQNLYVSVFEGSKEDNVPFDQEAWDIWKGLIDEDRIILGNKKDNFWEMGDQGPCGPCSEIHVDLRTPEEKAQVSGKSLVNNDHPQVVEIWNNVFMEFNRKADGSLEKLPAQHVDTGMGFERLCMALQGKTSNYDTDVFTPLIEKVTQITGYKYTSNEVKNISEEQNKTNIAIRVIVDHVRAVAFAIADGQLPSNTGAGYVIRRILRRAIRYGFTFLDTKEPFITKLVAVLASQMGEFFPEIKSQQQLVTNVIREEEASFLRTLEQGLQLLDKVVAETKGKEVSGAKAFELYDTFGFPIDLTALILREKGYELDEAGFNAAMQEQKNRSRAASEVFTEDWSVLIPGNIETFVGYDKTENDVKITRIRKVNSKKDGILYQIVLDNTPFYPEGGGQVGDKGTLVSANDSSDSEQAKQTIDIIDTKKENNLILHFAKQLPENIETGFVAKVNTNLRASTSKNHSATHLMHLALRSILGTHVEQKGSLVNPDYLRFDFSHFSKVSDDQLRQVEASVNAQIEAQLQLTEHRNIPIKEALDKGAMALFGEKYGDNVRMIEFGESKELCGGIHVKNTAQIWHFKILSEGAVAAGIRRIEAITGDAVKAFYTNQENTLSEIKEVLKKPQDILKSVTSLQDDNVKLKKQIEQLLKEKIEGLKNTLVSEFQEINGINFLSKQVDLSMSSTKDLLQALGSLKPNSFVVLASIEENMPNIHCYIAKELVAGKGLNANVVIKELGKYIEGNGGGQPFFASGKGKNVSGIKEALQKAIEFVK.

The Zn(2+) site is built by His579, His583, Cys681, and His685.

This sequence belongs to the class-II aminoacyl-tRNA synthetase family. The cofactor is Zn(2+).

It is found in the cytoplasm. The enzyme catalyses tRNA(Ala) + L-alanine + ATP = L-alanyl-tRNA(Ala) + AMP + diphosphate. In terms of biological role, catalyzes the attachment of alanine to tRNA(Ala) in a two-step reaction: alanine is first activated by ATP to form Ala-AMP and then transferred to the acceptor end of tRNA(Ala). Also edits incorrectly charged Ser-tRNA(Ala) and Gly-tRNA(Ala) via its editing domain. This Flavobacterium psychrophilum (strain ATCC 49511 / DSM 21280 / CIP 103535 / JIP02/86) protein is Alanine--tRNA ligase.